The primary structure comprises 471 residues: Glutamate--tRNA ligase (471 aa).

The short motif at 9–19 (PSPTGYLHVGG) is the 'HIGH' region element. Zn(2+) contacts are provided by C98, C100, C125, and H127. The 'KMSKS' region motif lies at 237-241 (KLSKR). K240 is an ATP binding site.

The protein belongs to the class-I aminoacyl-tRNA synthetase family. Glutamate--tRNA ligase type 1 subfamily. Monomer. Zn(2+) serves as cofactor.

Its subcellular location is the cytoplasm. The enzyme catalyses tRNA(Glu) + L-glutamate + ATP = L-glutamyl-tRNA(Glu) + AMP + diphosphate. Its function is as follows. Catalyzes the attachment of glutamate to tRNA(Glu) in a two-step reaction: glutamate is first activated by ATP to form Glu-AMP and then transferred to the acceptor end of tRNA(Glu). The protein is Glutamate--tRNA ligase of Salmonella dublin (strain CT_02021853).